We begin with the raw amino-acid sequence, 139 residues long: Translation initiation factor 2 subunit beta (139 aa).

It belongs to the eIF-2-beta/eIF-5 family. As to quaternary structure, heterotrimer composed of an alpha, a beta and a gamma chain.

Its function is as follows. eIF-2 functions in the early steps of protein synthesis by forming a ternary complex with GTP and initiator tRNA. The chain is Translation initiation factor 2 subunit beta from Nanoarchaeum equitans (strain Kin4-M).